A 295-amino-acid polypeptide reads, in one-letter code: Probable dTDP-4,6-dihydroxy-2-methyloxan-3-one 4-ketoreductase (295 aa).

NADH-binding positions include 10–12 (GML), 36–37 (DV), 60–62 (AYT), Tyr126, and Lys130. Residues 11–12 (ML), 36–37 (DV), 60–62 (AYT), Tyr126, and Lys130 contribute to the NADPH site. Residue Tyr126 is the Proton donor/acceptor of the active site.

The protein belongs to the dTDP-4-dehydrorhamnose reductase family. Requires Mg(2+) as cofactor.

Its pathway is antibiotic biosynthesis. Functionally, involved in the biosynthesis of one of the two 2,6-deoxysugars, dTDP-L-oleandrose, attached to the macrolactone ring oleandolide to produce the aglycone antibiotic oleandomycin. Probably catalyzes the reduction of dTDP-4-keto-2,6-dideoxy-beta-L-galactose to yield dTDP-L-olivose. The sequence is that of Probable dTDP-4,6-dihydroxy-2-methyloxan-3-one 4-ketoreductase from Streptomyces antibioticus.